The chain runs to 161 residues: Regulator of ribonuclease activity A (161 aa).

This sequence belongs to the RraA family. Homotrimer. Binds to both RNA-binding sites in the C-terminal region of Rne and to RhlB.

It localises to the cytoplasm. Its function is as follows. Globally modulates RNA abundance by binding to RNase E (Rne) and regulating its endonucleolytic activity. Can modulate Rne action in a substrate-dependent manner by altering the composition of the degradosome. Modulates RNA-binding and helicase activities of the degradosome. This is Regulator of ribonuclease activity A from Shigella dysenteriae serotype 1 (strain Sd197).